The chain runs to 393 residues: Phosphoglycerate kinase (393 aa).

Substrate-binding positions include 21-23 (DFN), Arg36, 59-62 (HLGR), Arg118, and Arg151. ATP is bound by residues Lys201, Glu323, and 349–352 (GGDS).

Belongs to the phosphoglycerate kinase family. Monomer.

It localises to the cytoplasm. The enzyme catalyses (2R)-3-phosphoglycerate + ATP = (2R)-3-phospho-glyceroyl phosphate + ADP. It participates in carbohydrate degradation; glycolysis; pyruvate from D-glyceraldehyde 3-phosphate: step 2/5. This is Phosphoglycerate kinase from Moorella thermoacetica (strain ATCC 39073 / JCM 9320).